We begin with the raw amino-acid sequence, 189 residues long: Cancer/testis antigen family 45 member A1 (189 aa).

The segment covering 1 to 23 has biased composition (basic and acidic residues); sequence MTDKTEKVAVDPETVFKRPRECD. 2 disordered regions span residues 1–27 and 83–118; these read MTDKTEKVAVDPETVFKRPRECDSPSY and RMMQKPGSNAPVGGNVTSSFSGDDLECRETASSPKS.

This sequence belongs to the CT45 family. In terms of tissue distribution, testis specific. Expressed in cancer cell lines.

It is found in the nucleus. The protein is Cancer/testis antigen family 45 member A1 of Homo sapiens (Human).